The chain runs to 439 residues: GTPase Der (439 aa).

EngA-type G domains are found at residues 3 to 167 and 176 to 351; these read PLVA…PKSS and TRIA…AQYS. Residues 9 to 16, 56 to 60, 119 to 122, 182 to 189, 229 to 233, and 294 to 297 contribute to the GTP site; these read GRPNVGKS, DTGGF, NKVD, DTAGI, and NKWD. The KH-like domain maps to 352-436; it reads KRVSTSDLNR…PLKIIFRGRD (85 aa).

It belongs to the TRAFAC class TrmE-Era-EngA-EngB-Septin-like GTPase superfamily. EngA (Der) GTPase family. Associates with the 50S ribosomal subunit.

GTPase that plays an essential role in the late steps of ribosome biogenesis. The chain is GTPase Der from Geobacter metallireducens (strain ATCC 53774 / DSM 7210 / GS-15).